The sequence spans 554 residues: CTP synthase (554 aa).

Residues 1–270 (MTKFVFVTGG…DGLICDKLRL (270 aa)) are amidoligase domain. CTP is bound at residue Ser13. Position 13 (Ser13) interacts with UTP. ATP is bound by residues 14–19 (SLGKGI) and Asp71. Residues Asp71 and Glu144 each contribute to the Mg(2+) site. Residues 151–153 (DIE), 191–196 (KTKPTQ), and Lys227 contribute to the CTP site. Residues 191–196 (KTKPTQ) and Lys227 contribute to the UTP site. In terms of domain architecture, Glutamine amidotransferase type-1 spans 295–548 (TVAMVGKYVD…IAAAKARHQA (254 aa)). Gly357 serves as a coordination point for L-glutamine. Catalysis depends on Cys384, which acts as the Nucleophile; for glutamine hydrolysis. Residues 385–388 (LGMQ), Glu408, and Arg474 each bind L-glutamine. Active-site residues include His521 and Glu523.

The protein belongs to the CTP synthase family. As to quaternary structure, homotetramer.

The enzyme catalyses UTP + L-glutamine + ATP + H2O = CTP + L-glutamate + ADP + phosphate + 2 H(+). The catalysed reaction is L-glutamine + H2O = L-glutamate + NH4(+). It catalyses the reaction UTP + NH4(+) + ATP = CTP + ADP + phosphate + 2 H(+). Its pathway is pyrimidine metabolism; CTP biosynthesis via de novo pathway; CTP from UDP: step 2/2. Its activity is regulated as follows. Allosterically activated by GTP, when glutamine is the substrate; GTP has no effect on the reaction when ammonia is the substrate. The allosteric effector GTP functions by stabilizing the protein conformation that binds the tetrahedral intermediate(s) formed during glutamine hydrolysis. Inhibited by the product CTP, via allosteric rather than competitive inhibition. In terms of biological role, catalyzes the ATP-dependent amination of UTP to CTP with either L-glutamine or ammonia as the source of nitrogen. Regulates intracellular CTP levels through interactions with the four ribonucleotide triphosphates. The sequence is that of CTP synthase from Verminephrobacter eiseniae (strain EF01-2).